Consider the following 505-residue polypeptide: Apolipoprotein N-acyltransferase (505 aa).

6 helical membrane-spanning segments follow: residues Leu-23–Tyr-43, Gly-58–Asn-78, Pro-85–Leu-105, Leu-125–Phe-145, Leu-162–Leu-182, and Pro-192–Leu-212. The region spanning Ile-230–Pro-469 is the CN hydrolase domain. Glu-269 (proton acceptor) is an active-site residue. Lys-329 is an active-site residue. Residue Cys-381 is the Nucleophile of the active site. A helical transmembrane segment spans residues Trp-482–Ala-502.

The protein belongs to the CN hydrolase family. Apolipoprotein N-acyltransferase subfamily.

It is found in the cell inner membrane. It catalyses the reaction N-terminal S-1,2-diacyl-sn-glyceryl-L-cysteinyl-[lipoprotein] + a glycerophospholipid = N-acyl-S-1,2-diacyl-sn-glyceryl-L-cysteinyl-[lipoprotein] + a 2-acyl-sn-glycero-3-phospholipid + H(+). Its pathway is protein modification; lipoprotein biosynthesis (N-acyl transfer). Catalyzes the phospholipid dependent N-acylation of the N-terminal cysteine of apolipoprotein, the last step in lipoprotein maturation. This chain is Apolipoprotein N-acyltransferase, found in Pseudomonas putida (strain ATCC 47054 / DSM 6125 / CFBP 8728 / NCIMB 11950 / KT2440).